The chain runs to 407 residues: Phosphonoacetate hydrolase (407 aa).

Positions 25, 64, 202, 206, 241, 242, and 368 each coordinate Zn(2+). 2 residues coordinate substrate: Thr64 and Asp202. Substrate-binding residues include His242 and His368.

This sequence belongs to the alkaline phosphatase family. PhnA subfamily. Homodimer. Requires Zn(2+) as cofactor.

The enzyme catalyses phosphonoacetate + H2O = acetate + phosphate + H(+). With respect to regulation, completely inhibited by EDTA and 1,10-phenanthroline. Moderately inhibited by the phosphonocarboxylic acids phosphonoformate and 3-phosphonopropionate and the phosphonate herbicide glyphosate. Partially inhibited by the reducing agents sodium sulfide and dithiotheitol and the chelating agent iminodiacetate. Nonphosphonate analogs of phosphonoacetate, such as arsonoacetate, sulfonoacetate and malonate are poor inhibitors. Inorganic phosphate, acetate and the known phosphonotase inhibitor phosphite have little effect on activity. Not inhibited by the alkylphosphonic acids methylphosphonate and ethylphosphonate, or the aminoalkylphosphonates 2-aminoethylphosphonate, 3-aminopropylphosphonate and 4-aminobutylphosphonate. Fe(3+), Ca(2+), Mg(2+) and Cs(+) have no effect on activity. Activity is slightly increased by the aminoalkylphosphonates 1-aminoethylphosphonate, 1-aminobutylphosphonate, 2-amino-4-butylphosphonate. Activity is increased by Zn(2+), Mn(2+) and Co(2+), these 3 metal ions also allow recovery of activity after EDTA treatment. In terms of biological role, specifically hydrolyzes phosphonoacetate. Does not have activity on other organophosphonates or acetates. In Pseudomonas fluorescens, this protein is Phosphonoacetate hydrolase.